The sequence spans 149 residues: MERTFVMIKPDGVQRGLVGEILSRFENKGFKIVAGKFGVLAESIVDKHYEEHLAKPFYPGMKAYITSGPVFRFVLEGDNVVATVRKMNGATNPTEANPGTIRGDYALSIGKNVIHAADSPESAAREIGIHFTPAELVSYTKIDESELYE.

The ATP site is built by Lys-9, Phe-57, Arg-85, Thr-91, Arg-102, and Asn-112. The Pros-phosphohistidine intermediate role is filled by His-115.

This sequence belongs to the NDK family. Mg(2+) is required as a cofactor.

Its subcellular location is the cytoplasm. It catalyses the reaction a 2'-deoxyribonucleoside 5'-diphosphate + ATP = a 2'-deoxyribonucleoside 5'-triphosphate + ADP. The enzyme catalyses a ribonucleoside 5'-diphosphate + ATP = a ribonucleoside 5'-triphosphate + ADP. In terms of biological role, major role in the synthesis of nucleoside triphosphates other than ATP. The ATP gamma phosphate is transferred to the NDP beta phosphate via a ping-pong mechanism, using a phosphorylated active-site intermediate. The chain is Nucleoside diphosphate kinase from Methanocorpusculum labreanum (strain ATCC 43576 / DSM 4855 / Z).